The sequence spans 287 residues: ATP synthase gamma chain (287 aa).

The protein belongs to the ATPase gamma chain family. F-type ATPases have 2 components, CF(1) - the catalytic core - and CF(0) - the membrane proton channel. CF(1) has five subunits: alpha(3), beta(3), gamma(1), delta(1), epsilon(1). CF(0) has three main subunits: a, b and c.

The protein resides in the cell inner membrane. In terms of biological role, produces ATP from ADP in the presence of a proton gradient across the membrane. The gamma chain is believed to be important in regulating ATPase activity and the flow of protons through the CF(0) complex. This Photorhabdus laumondii subsp. laumondii (strain DSM 15139 / CIP 105565 / TT01) (Photorhabdus luminescens subsp. laumondii) protein is ATP synthase gamma chain.